The sequence spans 249 residues: Indole-3-glycerol phosphate synthase (249 aa).

Belongs to the TrpC family.

The enzyme catalyses 1-(2-carboxyphenylamino)-1-deoxy-D-ribulose 5-phosphate + H(+) = (1S,2R)-1-C-(indol-3-yl)glycerol 3-phosphate + CO2 + H2O. It participates in amino-acid biosynthesis; L-tryptophan biosynthesis; L-tryptophan from chorismate: step 4/5. The sequence is that of Indole-3-glycerol phosphate synthase from Pyrobaculum arsenaticum (strain DSM 13514 / JCM 11321 / PZ6).